Here is a 417-residue protein sequence, read N- to C-terminus: NADH-quinone oxidoreductase subunit D (417 aa).

This sequence belongs to the complex I 49 kDa subunit family. NDH-1 is composed of 14 different subunits. Subunits NuoB, C, D, E, F, and G constitute the peripheral sector of the complex.

Its subcellular location is the cell inner membrane. It catalyses the reaction a quinone + NADH + 5 H(+)(in) = a quinol + NAD(+) + 4 H(+)(out). In terms of biological role, NDH-1 shuttles electrons from NADH, via FMN and iron-sulfur (Fe-S) centers, to quinones in the respiratory chain. The immediate electron acceptor for the enzyme in this species is believed to be ubiquinone. Couples the redox reaction to proton translocation (for every two electrons transferred, four hydrogen ions are translocated across the cytoplasmic membrane), and thus conserves the redox energy in a proton gradient. This is NADH-quinone oxidoreductase subunit D from Paraburkholderia xenovorans (strain LB400).